A 1754-amino-acid chain; its full sequence is Collagen alpha-1(XVIII) chain (1754 aa).

Residues 1 to 23 (MAPYPCGCHILLLLFCCLAAARA) form the signal peptide. The interval 42-104 (ATTIPEPQGP…TSAESPDAPE (63 aa)) is disordered. Over residues 57–73 (TADTTTHVTPRNGSTEP) the composition is skewed to polar residues. Asparagine 68, asparagine 129, and asparagine 164 each carry an N-linked (GlcNAc...) asparagine glycan. The disordered stretch occupies residues 152-256 (LALAGPSSTP…APSQQLQRPD (105 aa)). The span at 157 to 169 (PSSTPQENGTTLW) shows a compositional bias: polar residues. Residues 215–253 (SGRASLSSLLGGAPPWGSLQDPDSQGLSPAAAAPSQQLQ) are compositionally biased toward low complexity. The FZ domain maps to 329 to 446 (APAGRCLPLP…TQEDGYCVLI (118 aa)). 5 cysteine pairs are disulfide-bonded: cysteine 334-cysteine 397, cysteine 344-cysteine 390, cysteine 381-cysteine 419, cysteine 408-cysteine 443, and cysteine 412-cysteine 432. One can recognise a Laminin G-like domain in the interval 456–644 (EVGLLQLLGD…IAELKVRRDP (189 aa)). Residues 645-751 (QVSPMHCLDE…RTPGGRVKEG (107 aa)) are nonhelical region 1 (NC1). The disordered stretch occupies residues 645-1443 (QVSPMHCLDE…GPPGTMGASS (799 aa)). Residues 672-681 (DARELLREET) show a composition bias toward basic and acidic residues. At threonine 696 the chain carries Phosphothreonine. The segment covering 717–738 (QTTVASLGAQTLPGSDSVSTWD) has biased composition (polar residues). Residues 752–785 (GLKGQKGEPGVPGPPGRAGPPGSPCLPGPPGLPC) form a triple-helical region 1 (COL1) region. Residues 762-789 (VPGPPGRAGPPGSPCLPGPPGLPCPVSP) show a composition bias toward pro residues. The tract at residues 786-795 (PVSPLGPAGP) is nonhelical region 2 (NC2). The triple-helical region 2 (COL2) stretch occupies residues 796–875 (ALQTVPGPQG…QGPPGPPGPS (80 aa)). Basic and acidic residues predominate over residues 815 to 831 (TPGRDGEPGDPGEDGKP). Low complexity predominate over residues 833–846 (DTGPQGFPGTPGDV). A compositionally biased stretch (pro residues) spans 862-874 (PPGPQGPPGPPGP). A nonhelical region 3 (NC3) region spans residues 876-899 (FRHDKLTFIDMEGSGFGGDLEALR). Serine 889 carries an O-linked (Xyl...) (chondroitin sulfate) serine glycan. The segment at 900–1021 (GPRGFPGPPG…PGPPGPPGPG (122 aa)) is triple-helical region 3 (COL3). Pro residues predominate over residues 904–914 (FPGPPGPPGVP). Asparagine 926 is a glycosylation site (N-linked (GlcNAc...) asparagine). Residues 930-942 (VPGPAGLPGVPGR) are compositionally biased toward low complexity. Residues 946 to 961 (PGFPGLPGPPGPPGRE) are compositionally biased toward pro residues. Residues 976 to 1003 (AGAPGHKGSKGAPGPAGARGESGLAGAP) show a composition bias toward low complexity. The segment covering 1005–1021 (PAGPPGPPGPPGPPGPG) has biased composition (pro residues). The segment at 1022–1044 (LPAGFDDMEGSGGPFWSTARSAD) is nonhelical region 4 (NC4). A triple-helical region 4 (COL4) region spans residues 1045–1127 (GPQGPPGLPG…PGPPGPPGPV (83 aa)). Residues 1053–1065 (PGLKGDPGVPGLP) are compositionally biased toward low complexity. Residues 1095–1109 (KGDRGSRGEKGDPGK) show a composition bias toward basic and acidic residues. Positions 1117–1126 (LPGPPGPPGP) are enriched in pro residues. Residues 1128-1141 (VYVSEQDGSVLSVP) form a nonhelical region 5 (NC5) region. A compositionally biased stretch (low complexity) spans 1141–1153 (PGPEGRPGFAGFP). The segment at 1142 to 1183 (GPEGRPGFAGFPGPAGPKGNLGSKGERGSPGPKGEKGEPGSI) is triple-helical region 5 (COL5). The segment at 1184–1196 (FSPDGGALGPAQK) is nonhelical region 6 (NC6). The interval 1197-1269 (GAKGEPGFRG…PGPPGPPGTP (73 aa)) is triple-helical region 6 (COL6). The segment covering 1254–1268 (PGPPGPPGPPGPPGT) has biased composition (pro residues). A nonhelical region 7 (NC7) region spans residues 1270 to 1279 (VYDSNVFAES). A triple-helical region 7 (COL7) region spans residues 1280-1312 (SRPGPPGLPGNQGPPGPKGAKGEVGPPGPPGQF). The segment covering 1282-1296 (PGPPGLPGNQGPPGP) has biased composition (pro residues). Residues 1313–1324 (PFDFLQLEAEMK) are nonhelical region 8 (NC8). The span at 1321–1341 (AEMKGEKGDRGDAGQKGERGE) shows a compositional bias: basic and acidic residues. The triple-helical region 8 (COL8) stretch occupies residues 1325 to 1346 (GEKGDRGDAGQKGERGEPGGGG). Residues 1330 to 1332 (RGD) carry the Cell attachment site motif. The nonhelical region 9 (NC9) stretch occupies residues 1347-1353 (FFGSSLP). Composition is skewed to pro residues over residues 1353–1365 (PGPP…PGPR), 1401–1414 (PPGP…PSFP), and 1424–1436 (PGPP…PGPP). Residues 1354 to 1411 (GPPGPPGPPGPRGYPGIPGPKGESIRGQPGPPGPQGPPGIGYEGRQGPPGPPGPPGPP) are triple-helical region 9 (COL9). The segment at 1412 to 1424 (SFPGPHRQTISVP) is nonhelical region 10 (NC10). The interval 1425-1442 (GPPGPPGPPGPPGTMGAS) is triple-helical region 10 (COL10). Positions 1443–1754 (SGVRLWATRQ…IENSFMTASK (312 aa)) are nonhelical region 11 (NC11). Positions 1456-1501 (GQVHEVPEGWLIFVAEQEELYVRVQNGFRKVQLEARTPLPRGTDNE) are non-collagenous domain 1 association domain. A non-collagenous domain 1 hinge region region spans residues 1502–1571 (VAALQPPVVQ…RPARPTSPPA (70 aa)). The disordered stretch occupies residues 1511–1556 (QLHDSNPYPRREHPHPTARPWRADDILASPPRLPEPQPYPGAPHHS). The segment covering 1519-1535 (PRREHPHPTARPWRADD) has biased composition (basic and acidic residues). Over residues 1541 to 1551 (PRLPEPQPYPG) the composition is skewed to pro residues. Threonine 1567 is a glycosylation site (O-linked (GalNAc...) threonine). Residues histidine 1572, histidine 1574, histidine 1582, and aspartate 1647 each contribute to the Zn(2+) site. Disulfide bonds link cysteine 1604–cysteine 1744 and cysteine 1706–cysteine 1736.

It belongs to the multiplexin collagen family. As to quaternary structure, forms homotrimers. Recombinant non-collagenous domain 1 has stronger affinity to NID1, HSPG2 and laminin-1:NID1 complex and lower affinity to FBLN1 and FBLN2 than endostatin. In terms of assembly, monomeric. Interacts with KDR/VEGFR2. Interacts with the ITGA5:ITGB1 complex. Interacts with NID1, HSPG2, laminin-1:NID1 complex, FBLN1 and FBLN2. Prolines at the third position of the tripeptide repeating unit (G-X-Y) of the triple-helical regions are hydroxylated. In terms of processing, circulating endostatins are found as sialoglycoprotein and asialoglycoprotein structures. Post-translationally, undergoes proteolytic processing by CTSL/cathepsin-L and elastase-like proteases to generate both non-collagenous domain 1 trimers and endostatin monomers. In tissue extracts (brain, skeletal muscle, heart, kidney, testis and liver) predominantly bands of approximately 38 kDa are detected; recombinant non-collagenous domain 1 shows similar mobility. In vitro, several proteolytic cleavage sites in the non-collagenous domain 1 hinge region generating different endostatin-like peptides are reported. In terms of tissue distribution, detected in placenta (at protein level). Present in multiple organs with highest levels in liver, lung and kidney.

The protein resides in the secreted. It is found in the extracellular space. It localises to the extracellular matrix. The protein localises to the basement membrane. Probably plays a major role in determining the retinal structure as well as in the closure of the neural tube. Functionally, may regulate extracellular matrix-dependent motility and morphogenesis of endothelial and non-endothelial cells; the function requires homotrimerization and implicates MAPK signaling. Its function is as follows. Potently inhibits endothelial cell proliferation and angiogenesis. May inhibit angiogenesis by binding to the heparan sulfate proteoglycans involved in growth factor signaling. Inhibits VEGFA-induced endothelial cell proliferation and migration. Seems to inhibit VEGFA-mediated signaling by blocking the interaction of VEGFA to its receptor KDR/VEGFR2. Modulates endothelial cell migration in an integrin-dependent manner implicating integrin ITGA5:ITGB1 and to a lesser extent ITGAV:ITGB3 and ITGAV:ITGB5. May negatively regulate the activity of homotrimeric non-collagenous domain 1. This Homo sapiens (Human) protein is Collagen alpha-1(XVIII) chain.